A 381-amino-acid chain; its full sequence is Beta-1,4-galactosyltransferase 5 (381 aa).

Topologically, residues 1–11 (MPTHLRFRRRS) are cytoplasmic. Residues 12 to 32 (FLGLLFLFSLSTSALYFIYSA) traverse the membrane as a helical; Signal-anchor for type II membrane protein segment. The Lumenal segment spans residues 33-381 (PGIVNEYLFM…SRDLAPVADY (349 aa)). Residues Asn73, Asn82, and Asn120 are each glycosylated (N-linked (GlcNAc...) asparagine). The cysteines at positions 106 and 151 are disulfide-linked. UDP-alpha-D-galactose-binding positions include 162–166 (PFRNR), 201–203 (FNR), 228–229 (VD), Tyr257, and Trp289. Cys222 and Cys241 form a disulfide bridge. Asp229 is a Mn(2+) binding site. Residue 291-294 (GEDD) coordinates N-acetyl-D-glucosamine. Residue His322 participates in Mn(2+) binding. A UDP-alpha-D-galactose-binding site is contributed by 322–323 (HH). Arg333 lines the N-acetyl-D-glucosamine pocket. Asn366 is a glycosylation site (N-linked (GlcNAc...) asparagine).

This sequence belongs to the glycosyltransferase 7 family. It depends on Mn(2+) as a cofactor.

The protein localises to the golgi apparatus. It is found in the golgi stack membrane. It carries out the reaction a beta-D-glucosyl-(1&lt;-&gt;1')-N-acylsphing-4-enine + UDP-alpha-D-galactose = a beta-D-Gal-(1-&gt;4)-beta-D-Glc-(1&lt;-&gt;1)-Cer(d18:1(4E)) + UDP + H(+). The protein operates within protein modification; protein glycosylation. Its pathway is sphingolipid metabolism. In terms of biological role, catalyzes the synthesis of lactosylceramide (LacCer) via the transfer of galactose from UDP-galactose to glucosylceramide (GlcCer). Required for proper patterning of the dorsoventral axis during embryogenesis through the regulation of BMP signaling. Plays a role in proteoglycan glycosylation that is required for BMP-dependent specification of the dorsoventral axis. In Danio rerio (Zebrafish), this protein is Beta-1,4-galactosyltransferase 5 (b4galt5).